The following is a 177-amino-acid chain: Large ribosomal subunit protein uL6 (177 aa).

Positions 152–171 (RPPEPYKGKGVRYDDEEVRR) are enriched in basic and acidic residues. Residues 152–177 (RPPEPYKGKGVRYDDEEVRRKEAKKK) form a disordered region.

The protein belongs to the universal ribosomal protein uL6 family. In terms of assembly, part of the 50S ribosomal subunit.

Its function is as follows. This protein binds to the 23S rRNA, and is important in its secondary structure. It is located near the subunit interface in the base of the L7/L12 stalk, and near the tRNA binding site of the peptidyltransferase center. The sequence is that of Large ribosomal subunit protein uL6 from Shewanella putrefaciens (strain CN-32 / ATCC BAA-453).